Reading from the N-terminus, the 266-residue chain is MPIATPYEDLLRRVLETGTAKSDRTGTGTRSLFGQQIRYDLGCGFPLLTTKKVHFKSVVYELLWFLRGDSNVGWLQQHGVTIWDEWASETGDLGPIYGVQWRSWPTPSGEHIDQISAALELLRTDPDSRRIIVSAWNVGQIPQMALPPCHAFFQFYVADGRLSCQLYQRSADLFLGVPFNIASYALLTHMMAAQAGLSVGEFIWTGGDCHIYDNHVEQVTEQLRREPRPYPKLSLSQRDSIFDYTYEDVVVQDYDPHPAIKAPVAV.

R24 is a dUMP binding site. H54 is a binding site for (6R)-5,10-methylene-5,6,7,8-tetrahydrofolate. 129–130 provides a ligand contact to dUMP; the sequence is RR. Residue C149 is the Nucleophile of the active site. DUMP-binding positions include 169–172, N180, and 210–212; these read RSAD and HIY. D172 provides a ligand contact to (6R)-5,10-methylene-5,6,7,8-tetrahydrofolate. A265 provides a ligand contact to (6R)-5,10-methylene-5,6,7,8-tetrahydrofolate.

It belongs to the thymidylate synthase family. Bacterial-type ThyA subfamily. As to quaternary structure, homodimer.

It is found in the cytoplasm. It carries out the reaction dUMP + (6R)-5,10-methylene-5,6,7,8-tetrahydrofolate = 7,8-dihydrofolate + dTMP. It participates in pyrimidine metabolism; dTTP biosynthesis. In terms of biological role, catalyzes the reductive methylation of 2'-deoxyuridine-5'-monophosphate (dUMP) to 2'-deoxythymidine-5'-monophosphate (dTMP) while utilizing 5,10-methylenetetrahydrofolate (mTHF) as the methyl donor and reductant in the reaction, yielding dihydrofolate (DHF) as a by-product. This enzymatic reaction provides an intracellular de novo source of dTMP, an essential precursor for DNA biosynthesis. The polypeptide is Thymidylate synthase (Mycobacterium ulcerans (strain Agy99)).